Consider the following 152-residue polypeptide: Transcriptional regulator MraZ (152 aa).

SpoVT-AbrB domains are found at residues 5 to 52 and 81 to 124; these read LNPI…THPQ and ATEV…GKSQ.

Belongs to the MraZ family. In terms of assembly, forms oligomers.

It localises to the cytoplasm. The protein localises to the nucleoid. This chain is Transcriptional regulator MraZ, found in Coxiella burnetii (strain Dugway 5J108-111).